A 520-amino-acid polypeptide reads, in one-letter code: Maturase K (520 aa).

This sequence belongs to the intron maturase 2 family. MatK subfamily.

It is found in the plastid. Its subcellular location is the chloroplast. Its function is as follows. Usually encoded in the trnK tRNA gene intron. Probably assists in splicing its own and other chloroplast group II introns. The chain is Maturase K from Aspidistra elatior (Cast-iron plant).